Reading from the N-terminus, the 142-residue chain is Putative pre-16S rRNA nuclease (142 aa).

This sequence belongs to the YqgF nuclease family.

Its subcellular location is the cytoplasm. Functionally, could be a nuclease involved in processing of the 5'-end of pre-16S rRNA. The chain is Putative pre-16S rRNA nuclease from Lactobacillus acidophilus (strain ATCC 700396 / NCK56 / N2 / NCFM).